The chain runs to 292 residues: Tissue factor (292 aa).

Positions 1–35 (MATPNGPRVPCPQAAVARALLFGLVLIQGAGVAGT) are cleaved as a signal peptide. The Extracellular portion of the chain corresponds to 36 to 248 (TDVVVAYNIT…TSHEKVLSTE (213 aa)). N-linked (GlcNAc...) asparagine glycosylation is present at asparagine 43. A WKS motif motif is present at residues 46–48 (WKS). A disulfide bridge links cysteine 81 with cysteine 89. Asparagine 153 and asparagine 181 each carry an N-linked (GlcNAc...) asparagine glycan. Cysteine 215 and cysteine 238 are disulfide-bonded. A helical transmembrane segment spans residues 249–271 (LFFIIGTVMLVIIIFIVVLSVSL). Residues 272-292 (HKCRKVRAERSGKENTPLNAA) lie on the Cytoplasmic side of the membrane. Cysteine 274 is lipidated: S-palmitoyl cysteine.

This sequence belongs to the tissue factor family. As to quaternary structure, interacts with HSPE; the interaction, inhibited by heparin, promotes the generation of activated factor X and activates coagulation in the presence of activated factor VII.

It localises to the membrane. In terms of biological role, initiates blood coagulation by forming a complex with circulating factor VII or VIIa. The [TF:VIIa] complex activates factors IX or X by specific limited proteolysis. TF plays a role in normal hemostasis by initiating the cell-surface assembly and propagation of the coagulation protease cascade. The protein is Tissue factor (F3) of Bos taurus (Bovine).